The following is a 426-amino-acid chain: Glucan 1,3-beta-glucosidase (426 aa).

Residues 1-20 form the signal peptide; that stretch reads MLYPRALLPAAVALASLVLA. Glu-208 serves as the catalytic Proton donor. 2 disulfide bridges follow: Cys-290/Cys-416 and Cys-315/Cys-343. The active-site Nucleophile is the Glu-307.

Belongs to the glycosyl hydrolase 5 (cellulase A) family.

It localises to the secreted. The enzyme catalyses Successive hydrolysis of beta-D-glucose units from the non-reducing ends of (1-&gt;3)-beta-D-glucans, releasing alpha-glucose.. Its function is as follows. Beta-glucanases participate in the metabolism of beta-glucan, the main structural component of the cell wall. It could also function biosynthetically as a transglycosylase. The sequence is that of Glucan 1,3-beta-glucosidase from Blumeria graminis (Powdery mildew).